Here is a 462-residue protein sequence, read N- to C-terminus: Protoheme IX farnesyltransferase, mitochondrial (462 aa).

The next 7 helical transmembrane spans lie at 152-172, 173-193, 237-257, 269-289, 296-316, 348-368, and 411-431; these read LTIL…YTVS, LPEL…ANAI, MLFL…IVLY, IINT…GWAA, PGAW…FNAL, SLLM…DWVF, and AKKL…LAML.

Belongs to the UbiA prenyltransferase family.

Its subcellular location is the mitochondrion membrane. Converts protoheme IX and farnesyl diphosphate to heme O. This is Protoheme IX farnesyltransferase, mitochondrial (COX10) from Debaryomyces hansenii (strain ATCC 36239 / CBS 767 / BCRC 21394 / JCM 1990 / NBRC 0083 / IGC 2968) (Yeast).